Here is a 305-residue protein sequence, read N- to C-terminus: Dermonecrotic toxin LiSicTox-alphaII1 (305 aa).

The first 18 residues, 1 to 18 (MLLHIALILGCWSVFSEG), serve as a signal peptide directing secretion. A propeptide spanning residues 19-26 (AETDVAER) is cleaved from the precursor. The active site involves histidine 38. Mg(2+) is bound by residues glutamate 58 and aspartate 60. The active-site Nucleophile is the histidine 74. Intrachain disulfides connect cysteine 78-cysteine 84 and cysteine 80-cysteine 223. Mg(2+) is bound at residue aspartate 118.

It belongs to the arthropod phospholipase D family. Class II subfamily. Class IIa sub-subfamily. The cofactor is Mg(2+). Expressed by the venom gland.

The protein resides in the secreted. It carries out the reaction an N-(acyl)-sphingosylphosphocholine = an N-(acyl)-sphingosyl-1,3-cyclic phosphate + choline. The catalysed reaction is an N-(acyl)-sphingosylphosphoethanolamine = an N-(acyl)-sphingosyl-1,3-cyclic phosphate + ethanolamine. It catalyses the reaction a 1-acyl-sn-glycero-3-phosphocholine = a 1-acyl-sn-glycero-2,3-cyclic phosphate + choline. The enzyme catalyses a 1-acyl-sn-glycero-3-phosphoethanolamine = a 1-acyl-sn-glycero-2,3-cyclic phosphate + ethanolamine. Dermonecrotic toxins cleave the phosphodiester linkage between the phosphate and headgroup of certain phospholipids (sphingolipid and lysolipid substrates), forming an alcohol (often choline) and a cyclic phosphate. This toxin acts on sphingomyelin (SM) wih high activity. It may also act on ceramide phosphoethanolamine (CPE), lysophosphatidylcholine (LPC) and lysophosphatidylethanolamine (LPE), but not on lysophosphatidylserine (LPS), and lysophosphatidylglycerol (LPG). It acts by transphosphatidylation, releasing exclusively cyclic phosphate products as second products. Shows high hemolytic activity. Causes dermonecrosis, induces inflammatory response, platelet aggregation and increases vessel permeability. Shows no lethality when injected at higher dose into mice. May cause complement-dependent hemolysis as well as in a complement-independent manner. The hemolysis provoked in a complement-independent manner may be composed of several steps. The toxin may bind to erythrocyte membranes, may hydrolyze membrane phospholipids (SM and LPC) thus generating metabolism products that may cause hemolysis, probably by provoking an increase of calcium inside cells. The calcium influx may be due to the opening of L-type calcium channels, since L-type calcium channel blockers inhibit calcium influx. This chain is Dermonecrotic toxin LiSicTox-alphaII1, found in Loxosceles intermedia (Brown spider).